The chain runs to 133 residues: Large-conductance mechanosensitive channel (133 aa).

Helical transmembrane passes span 8–28 (FAMKGNVVDLAVGVIIGGAFG), 30–50 (IVTSLVNDVIMPILGLILGGI), and 73–93 (GQFIQNILDFLIISFSIFLFI).

Belongs to the MscL family. In terms of assembly, homopentamer.

The protein localises to the cell membrane. Its function is as follows. Channel that opens in response to stretch forces in the membrane lipid bilayer. May participate in the regulation of osmotic pressure changes within the cell. The protein is Large-conductance mechanosensitive channel of Hathewaya histolytica (Clostridium histolyticum).